The primary structure comprises 511 residues: 2,3-bisphosphoglycerate-independent phosphoglycerate mutase (511 aa).

Mn(2+) is bound at residue D12. Y36 bears the Phosphotyrosine mark. Residue S62 participates in Mn(2+) binding. S62 serves as the catalytic Phosphoserine intermediate. Substrate-binding positions include H123, 153–154 (RD), R185, R191, 261–264 (RPDR), and K336. Residues D403, H407, D444, H445, and H462 each contribute to the Mn(2+) site.

It belongs to the BPG-independent phosphoglycerate mutase family. In terms of assembly, monomer. It depends on Mn(2+) as a cofactor.

It catalyses the reaction (2R)-2-phosphoglycerate = (2R)-3-phosphoglycerate. It participates in carbohydrate degradation; glycolysis; pyruvate from D-glyceraldehyde 3-phosphate: step 3/5. Its function is as follows. Essential for rapid growth and for sporulation. Catalyzes the interconversion of 2-phosphoglycerate and 3-phosphoglycerate. This Bacillus pumilus (strain SAFR-032) protein is 2,3-bisphosphoglycerate-independent phosphoglycerate mutase.